A 443-amino-acid chain; its full sequence is MVMEKLGDSLQGALKKLIGAGRIDERTVNEVVKDIQRALLQADVNVKLVMGMSQRIKERAMKEAPPAGMNPREHVIRIVYQELMEIIGKGAEIQLKPQIIMMVGLQGSGKTTSTAKLARYFQRKGLKAGVVAADTFRPGAYHQLKTLCEKLNVAFYGEENNPDAVEITRNGLKALEKYDVKIVDTAGRHALEADLIEEMEQINAVAKPDHKFMVLDAGIGQQASQQAHAFNDSVGITGVIITKLDGTAKGGGALSAVSETKAPIAFIGVGETPEDFEKFEADRFISRLLGMGDLKSLMEKAEETLSEEDVNVEALMQGRFTLKDMYKQLEAMNKMGPLKQIMSMLPLGMGGMGGVKLSDEMFQATSDKMKNYKTIMDSMTEEEMTDPKLIGGSRIKRISRGSGCSPEEVRELLKYHKTMQTALKGFRGGKFNIQKMMKKRLGM.

GTP is bound by residues 104–111 (GLQGSGKT), 184–188 (DTAGR), and 242–245 (TKLD).

This sequence belongs to the GTP-binding SRP family. SRP54 subfamily. Part of the signal recognition particle protein translocation system, which is composed of SRP and FtsY. Archaeal SRP consists of a 7S RNA molecule of 300 nucleotides and two protein subunits: SRP54 and SRP19.

The protein resides in the cytoplasm. It catalyses the reaction GTP + H2O = GDP + phosphate + H(+). Functionally, involved in targeting and insertion of nascent membrane proteins into the cytoplasmic membrane. Binds to the hydrophobic signal sequence of the ribosome-nascent chain (RNC) as it emerges from the ribosomes. The SRP-RNC complex is then targeted to the cytoplasmic membrane where it interacts with the SRP receptor FtsY. The chain is Signal recognition particle 54 kDa protein from Methanosarcina barkeri (strain Fusaro / DSM 804).